The primary structure comprises 650 residues: Solute carrier family 23 member 2 (650 aa).

Positions 1 to 20 are enriched in polar residues; it reads MMGIGKNTTSKSMEAGSSTE. The interval 1–21 is disordered; the sequence is MMGIGKNTTSKSMEAGSSTEG. The Cytoplasmic segment spans residues 9-110; the sequence is TSKSMEAGSS…LCIFLGLQHY (102 aa). Ser-70 carries the post-translational modification Phosphoserine. Thr-75 is modified (phosphothreonine). Ser-78 is subject to Phosphoserine. Thr-79 carries the phosphothreonine modification. A Phosphoserine modification is found at Ser-81. A helical transmembrane segment spans residues 111–131; the sequence is LTCFSGTIAVPFLLADAMCVG. The Extracellular segment spans residues 132 to 139; that stretch reads YDQWATSQ. A helical membrane pass occupies residues 140–160; sequence LIGTIFFCVGITTLLQTTFGC. A topological domain (cytoplasmic) is located at residue Arg-161. Residues 162-182 form a helical membrane-spanning segment; sequence LPLFQASAFAFLAPARAILSL. At 183–218 the chain is on the extracellular side; sequence DKWKCNTTDVSVANGTAELLHTEHIWYPRIREIQGA. Residues Asn-188 and Asn-196 are each glycosylated (N-linked (GlcNAc...) asparagine). Residues 219-239 form a helical membrane-spanning segment; that stretch reads IIMSSLIEVVIGLLGLPGALL. Topologically, residues 240 to 266 are cytoplasmic; it reads KYIGPLTITPTVALIGLSGFQAAGERA. The helical transmembrane segment at 267-284 threads the bilayer; the sequence is GKHWGIAMLTIFLVLLFS. The Extracellular segment spans residues 285-288; it reads QYAR. Residues 289 to 302 constitute an intramembrane region (helical); that stretch reads NVKFPLPIYKSKKG. Topologically, residues 303–309 are extracellular; it reads WTAYKLQ. Residues 310-330 traverse the membrane as a helical segment; it reads LFKMFPIILAILVSWLLCFIF. Topologically, residues 331-371 are cytoplasmic; it reads TVTDVFPPDSTKYGFYARTDARQGVLLVAPWFKVPYPFQWG. Residues 372 to 392 traverse the membrane as a helical segment; it reads LPTVSAAGVIGMLSAVVASII. Residues 393–417 lie on the Extracellular side of the membrane; sequence ESIGDYYACARLSCAPPPPIHAINR. Residues 418-438 traverse the membrane as a helical segment; it reads GIFVEGLSCVLDGIFGTGNGS. Topologically, residues 439-461 are cytoplasmic; it reads TSSSPNIGVLGITKVGSRRVIQC. The chain crosses the membrane as a helical span at residues 462 to 482; it reads GAALMLALGMIGKFSALFASL. Residues 483–485 lie on the Extracellular side of the membrane; it reads PDP. The chain crosses the membrane as a helical span at residues 486 to 506; the sequence is VLGALFCTLFGMITAVGLSNL. Topologically, residues 507-516 are cytoplasmic; sequence QFIDLNSSRN. The chain crosses the membrane as a helical span at residues 517-537; the sequence is LFVLGFSIFFGLVLPSYLRQN. At 538–547 the chain is on the extracellular side; sequence PLVTGITGID. A helical transmembrane segment spans residues 548–568; sequence QVLNVLLTTAMFVGGCVAFIL. At 569–650 the chain is on the cytoplasmic side; the sequence is DNTIPGTPEE…SSDEDSQATG (82 aa). A Phosphothreonine modification is found at Thr-649.

It belongs to the nucleobase:cation symporter-2 (NCS2) (TC 2.A.40) family. Interacts with CLSTN3. Post-translationally, phosphorylated. As to expression, ubiquitous.

The protein resides in the cell membrane. The catalysed reaction is L-ascorbate(out) + 2 Na(+)(out) = L-ascorbate(in) + 2 Na(+)(in). Its function is as follows. Sodium/ascorbate cotransporter. Mediates electrogenic uptake of vitamin C, with a stoichiometry of 2 Na(+) for each ascorbate. This chain is Solute carrier family 23 member 2 (SLC23A2), found in Homo sapiens (Human).